The following is a 358-amino-acid chain: Endoplasmic reticulum junction formation protein lunapark-B (358 aa).

At 1–45 (MGAIISRWKTKLTTVEQLENIDKEIKQLEEFRAKNQRLQKLWVGR) the chain is on the cytoplasmic side. The stretch at 9–41 (KTKLTTVEQLENIDKEIKQLEEFRAKNQRLQKL) forms a coiled coil. The chain crosses the membrane as a helical span at residues 46–66 (LLLYSSALYLLISLFVYLLYL). Residues 67-69 (PEQ) are Lumenal-facing. The chain crosses the membrane as a helical span at residues 70–90 (WLLRLAMALPFFIYPVLVWFI). At 91–358 (RRFLIFLFSK…SRGMDKHGRA (268 aa)) the chain is on the cytoplasmic side. The stretch at 99–128 (SKRSERNNDKLEDLKATKKKILEEVMETET) forms a coiled coil. The C4-type; plays a role in ER morphology zinc finger occupies 275-300 (CQQCFSHNGMALKEEFEYLAFRCAYC). A disordered region spans residues 320–358 (NFEKRLRAESSTPGPAPHSATDTEESAPPSRGMDKHGRA).

Belongs to the lunapark family. As to quaternary structure, homodimer; homodimerization requires the C4-type zinc finger motif and decreases during mitosis in a phosphorylation-dependent manner. In terms of processing, phosphorylated. Phosphorylation occurs during interphase. Phosphorylation also occurs during mitosis; these phosphorylations reduce both its homodimerization and the ER three-way tubular junction formation.

It is found in the endoplasmic reticulum membrane. Its function is as follows. Endoplasmic reticulum (ER)-shaping membrane protein that plays a role in determining ER morphology. Involved in the stabilization of nascent three-way ER tubular junctions within the ER network. May also play a role as a curvature-stabilizing protein within three-way ER tubular junction network. In Takifugu rubripes (Japanese pufferfish), this protein is Endoplasmic reticulum junction formation protein lunapark-B (lnpkb).